Here is a 109-residue protein sequence, read N- to C-terminus: Spermidine export protein MdtI (109 aa).

The next 4 helical transmembrane spans lie at 6-26, 36-56, 64-84, and 88-108; these read WIHA…NVFL, WFGL…SQAV, AYAL…WVLF, and LNRK…MIKL.

Belongs to the drug/metabolite transporter (DMT) superfamily. Small multidrug resistance (SMR) (TC 2.A.7.1) family. MdtI subfamily. Forms a complex with MdtJ.

The protein resides in the cell inner membrane. Catalyzes the excretion of spermidine. The chain is Spermidine export protein MdtI from Enterobacter sp. (strain 638).